Here is a 114-residue protein sequence, read N- to C-terminus: Ribosome-binding factor A (114 aa).

Belongs to the RbfA family. In terms of assembly, monomer. Binds 30S ribosomal subunits, but not 50S ribosomal subunits or 70S ribosomes.

The protein resides in the cytoplasm. In terms of biological role, one of several proteins that assist in the late maturation steps of the functional core of the 30S ribosomal subunit. Associates with free 30S ribosomal subunits (but not with 30S subunits that are part of 70S ribosomes or polysomes). Required for efficient processing of 16S rRNA. May interact with the 5'-terminal helix region of 16S rRNA. This chain is Ribosome-binding factor A, found in Listeria innocua serovar 6a (strain ATCC BAA-680 / CLIP 11262).